Reading from the N-terminus, the 509-residue chain is Dihydrolipoyl dehydrogenase, mitochondrial (509 aa).

The transit peptide at 1 to 35 directs the protein to the mitochondrion; sequence MQSWSRVYCSLAKRGHFSRISHGLQAVSAVPLRTY. The residue at position 66 (lysine 66) is an N6-acetyllysine; alternate. The residue at position 66 (lysine 66) is an N6-succinyllysine; alternate. FAD is bound by residues 71-80 and lysine 89; that span reads EKNETLGGTC. A disulfide bridge connects residues cysteine 80 and cysteine 85. N6-acetyllysine; alternate is present on residues lysine 104, lysine 122, lysine 132, and lysine 143. 4 positions are modified to N6-succinyllysine; alternate: lysine 104, lysine 122, lysine 132, and lysine 143. Glycine 154 serves as a coordination point for FAD. 2 positions are modified to N6-succinyllysine: lysine 159 and lysine 166. 183-185 provides a ligand contact to FAD; that stretch reads TGS. NAD(+)-binding positions include 220-227 and glutamate 243; that span reads GAGVIGVE. N6-succinyllysine is present on residues lysine 273 and lysine 277. An NAD(+)-binding site is contributed by valine 278. Phosphoserine occurs at positions 285 and 297. Residue glycine 314 participates in NAD(+) binding. The residue at position 346 (lysine 346) is an N6-acetyllysine. FAD contacts are provided by residues aspartate 355 and 361-364; that span reads MLAH. Lysine 410 is modified (N6-acetyllysine; alternate). Lysine 410 carries the post-translational modification N6-succinyllysine; alternate. 2 positions are modified to N6-acetyllysine: lysine 417 and lysine 420. The residue at position 430 (lysine 430) is an N6-succinyllysine. Histidine 487 serves as the catalytic Proton acceptor. Serine 502 bears the Phosphoserine mark. Lysine 505 carries the N6-acetyllysine; alternate modification. Lysine 505 carries the N6-succinyllysine; alternate modification.

The protein belongs to the class-I pyridine nucleotide-disulfide oxidoreductase family. As to quaternary structure, homodimer. Part of the multimeric pyruvate dehydrogenase complex that contains multiple copies of pyruvate dehydrogenase (subunits PDHA (PDHA1 or PDHA2) and PDHB, E1), dihydrolipoamide acetyltransferase (DLAT, E2) and lipoamide dehydrogenase (DLD, E3). These subunits are bound to an inner core composed of about 48 DLAT and 12 PDHX molecules (by non covalent bonds). The 2-oxoglutarate dehydrogenase complex is composed of OGDH (2-oxoglutarate dehydrogenase; E1), DLST (dihydrolipoamide succinyltransferase; E2), DLD (dihydrolipoamide dehydrogenase; E3) and the assembly factor KGD4. It contains multiple copies of the three enzymatic components (E1, E2 and E3). In the nucleus, the 2-oxoglutarate dehydrogenase complex associates with KAT2A. Interacts with PDHX. Requires FAD as cofactor. Tyrosine phosphorylated.

The protein localises to the mitochondrion matrix. It is found in the nucleus. It localises to the cell projection. The protein resides in the cilium. Its subcellular location is the flagellum. The protein localises to the cytoplasmic vesicle. It is found in the secretory vesicle. It localises to the acrosome. It catalyses the reaction N(6)-[(R)-dihydrolipoyl]-L-lysyl-[protein] + NAD(+) = N(6)-[(R)-lipoyl]-L-lysyl-[protein] + NADH + H(+). Lipoamide dehydrogenase is a component of the glycine cleavage system as well as an E3 component of three alpha-ketoacid dehydrogenase complexes (pyruvate-, alpha-ketoglutarate-, and branched-chain amino acid-dehydrogenase complex). The 2-oxoglutarate dehydrogenase complex is mainly active in the mitochondrion. A fraction of the 2-oxoglutarate dehydrogenase complex also localizes in the nucleus and is required for lysine succinylation of histones: associates with KAT2A on chromatin and provides succinyl-CoA to histone succinyltransferase KAT2A. In monomeric form may have additional moonlighting function as serine protease. Involved in the hyperactivation of spermatazoa during capacitation and in the spermatazoal acrosome reaction. The chain is Dihydrolipoyl dehydrogenase, mitochondrial (DLD) from Canis lupus familiaris (Dog).